Reading from the N-terminus, the 430-residue chain is Long-chain specific acyl-CoA dehydrogenase, mitochondrial (430 aa).

The transit peptide at 1–30 (MATRLLRGSLRLWGGLCAPRLPTASRCSHS) directs the protein to the mitochondrion. An N6-acetyllysine modification is found at Lys-42. A phosphoserine mark is found at Ser-54 and Ser-55. N6-acetyllysine; alternate is present on residues Lys-66 and Lys-81. N6-succinyllysine; alternate occurs at positions 66 and 81. Lys-92 and Lys-95 each carry N6-acetyllysine. Lys-165 bears the N6-succinyllysine mark. Residues 170–179 (IAMTEPGAGS) and 203–205 (FIT) each bind FAD. Residue Ser-179 coordinates substrate. 227 to 228 (AH) is a substrate binding site. At Lys-240 the chain carries N6-succinyllysine. An N6-acetyllysine; alternate mark is found at Lys-254 and Lys-279. N6-succinyllysine; alternate is present on residues Lys-254 and Lys-279. Substrate contacts are provided by residues Tyr-282 and 289-292 (PQER). The Proton acceptor role is filled by Glu-291. Residue Arg-317 coordinates FAD. Position 318 is an N6-acetyllysine (Lys-318). At Lys-322 the chain carries N6-acetyllysine; alternate. Lys-322 is modified (N6-succinyllysine; alternate). Gln-328 contributes to the FAD binding site. Lys-358 is subject to N6-acetyllysine. Position 362 is a phosphoserine (Ser-362). 385–389 (QLHGG) contributes to the FAD binding site. 412 to 413 (GG) contacts substrate. 414 to 416 (TNE) serves as a coordination point for FAD.

The protein belongs to the acyl-CoA dehydrogenase family. Homotetramer. FAD is required as a cofactor. Post-translationally, acetylation at Lys-318 and Lys-322 in proximity of the cofactor-binding sites strongly reduces catalytic activity. These sites are deacetylated by SIRT3.

It is found in the mitochondrion matrix. It carries out the reaction a long-chain 2,3-saturated fatty acyl-CoA + oxidized [electron-transfer flavoprotein] + H(+) = a long-chain (2E)-enoyl-CoA + reduced [electron-transfer flavoprotein]. It catalyses the reaction hexanoyl-CoA + oxidized [electron-transfer flavoprotein] + H(+) = (2E)-hexenoyl-CoA + reduced [electron-transfer flavoprotein]. The catalysed reaction is octanoyl-CoA + oxidized [electron-transfer flavoprotein] + H(+) = (2E)-octenoyl-CoA + reduced [electron-transfer flavoprotein]. The enzyme catalyses decanoyl-CoA + oxidized [electron-transfer flavoprotein] + H(+) = (2E)-decenoyl-CoA + reduced [electron-transfer flavoprotein]. It carries out the reaction dodecanoyl-CoA + oxidized [electron-transfer flavoprotein] + H(+) = (2E)-dodecenoyl-CoA + reduced [electron-transfer flavoprotein]. It catalyses the reaction tetradecanoyl-CoA + oxidized [electron-transfer flavoprotein] + H(+) = (2E)-tetradecenoyl-CoA + reduced [electron-transfer flavoprotein]. The catalysed reaction is oxidized [electron-transfer flavoprotein] + hexadecanoyl-CoA + H(+) = (2E)-hexadecenoyl-CoA + reduced [electron-transfer flavoprotein]. The enzyme catalyses octadecanoyl-CoA + oxidized [electron-transfer flavoprotein] + H(+) = (2E)-octadecenoyl-CoA + reduced [electron-transfer flavoprotein]. It carries out the reaction eicosanoyl-CoA + oxidized [electron-transfer flavoprotein] + H(+) = (2E)-eicosenoyl-CoA + reduced [electron-transfer flavoprotein]. It catalyses the reaction docosanoyl-CoA + oxidized [electron-transfer flavoprotein] + H(+) = (2E)-docosenoyl-CoA + reduced [electron-transfer flavoprotein]. The catalysed reaction is tetracosanoyl-CoA + oxidized [electron-transfer flavoprotein] + H(+) = (2E)-tetracosenoyl-CoA + reduced [electron-transfer flavoprotein]. The enzyme catalyses (5E)-tetradecenoyl-CoA + oxidized [electron-transfer flavoprotein] + H(+) = (2E,5E)-tetradecadienoyl-CoA + reduced [electron-transfer flavoprotein]. It carries out the reaction (5Z)-tetradecenoyl-CoA + oxidized [electron-transfer flavoprotein] + H(+) = (2E,5Z)-tetradecadienoyl-CoA + reduced [electron-transfer flavoprotein]. It catalyses the reaction oxidized [electron-transfer flavoprotein] + (9Z)-octadecenoyl-CoA + H(+) = (2E,9Z)-octadecadienoyl-CoA + reduced [electron-transfer flavoprotein]. Its pathway is lipid metabolism; mitochondrial fatty acid beta-oxidation. In terms of biological role, long-chain specific acyl-CoA dehydrogenase is one of the acyl-CoA dehydrogenases that catalyze the first step of mitochondrial fatty acid beta-oxidation, an aerobic process breaking down fatty acids into acetyl-CoA and allowing the production of energy from fats. The first step of fatty acid beta-oxidation consists in the removal of one hydrogen from C-2 and C-3 of the straight-chain fatty acyl-CoA thioester, resulting in the formation of trans-2-enoyl-CoA. Among the different mitochondrial acyl-CoA dehydrogenases, long-chain specific acyl-CoA dehydrogenase can act on saturated and unsaturated acyl-CoAs with 6 to 24 carbons with a preference for 8 to 18 carbons long primary chains. The protein is Long-chain specific acyl-CoA dehydrogenase, mitochondrial of Sus scrofa (Pig).